Consider the following 379-residue polypeptide: Cytochrome b (379 aa).

4 helical membrane-spanning segments follow: residues 34 to 54 (LGSL…FLTM), 78 to 99 (WLIR…YLHV), 114 to 134 (WMTG…GYVL), and 179 to 199 (FYTF…IHLF). Heme b is bound by residues H84 and H98. Heme b is bound by residues H183 and H197. H202 provides a ligand contact to a ubiquinone. The next 4 membrane-spanning stretches (helical) occupy residues 227-247 (YKDM…CLID), 289-309 (LGGV…PFYN), 321-341 (MNQI…WIGK), and 348-368 (YIMT…FNVH).

It belongs to the cytochrome b family. In terms of assembly, the main subunits of complex b-c1 are: cytochrome b, cytochrome c1 and the Rieske protein. Heme b is required as a cofactor.

The protein localises to the mitochondrion inner membrane. In terms of biological role, component of the ubiquinol-cytochrome c reductase complex (complex III or cytochrome b-c1 complex) that is part of the mitochondrial respiratory chain. The b-c1 complex mediates electron transfer from ubiquinol to cytochrome c. Contributes to the generation of a proton gradient across the mitochondrial membrane that is then used for ATP synthesis. The protein is Cytochrome b (MT-CYB) of Locusta migratoria (Migratory locust).